The primary structure comprises 26 residues: Thrombin-like enzyme LmrSP-3 (26 aa).

It belongs to the peptidase S1 family. Snake venom subfamily. As to expression, expressed by the venom gland.

The protein localises to the secreted. Functionally, thrombin-like snake venom serine protease that cleaves alpha-chain of fibrinogen (FGA) releases only fibrinopeptide A. Shows coagulant, esterase and amidase activities. In Lachesis muta rhombeata (Bushmaster), this protein is Thrombin-like enzyme LmrSP-3.